Here is a 73-residue protein sequence, read N- to C-terminus: Acyl carrier protein (73 aa).

The 73-residue stretch at 1-73 (MAVFEKVQDI…DLVKYVENNK (73 aa)) folds into the Carrier domain. An O-(pantetheine 4'-phosphoryl)serine modification is found at serine 35.

This sequence belongs to the acyl carrier protein (ACP) family. Post-translationally, 4'-phosphopantetheine is transferred from CoA to a specific serine of apo-ACP by AcpS. This modification is essential for activity because fatty acids are bound in thioester linkage to the sulfhydryl of the prosthetic group.

The protein resides in the cytoplasm. The protein operates within lipid metabolism; fatty acid biosynthesis. Carrier of the growing fatty acid chain in fatty acid biosynthesis. The sequence is that of Acyl carrier protein from Lactococcus lactis subsp. lactis (strain IL1403) (Streptococcus lactis).